A 360-amino-acid chain; its full sequence is Mitogen-activated protein kinase 14 (360 aa).

Ser-2 carries the post-translational modification N-acetylserine. Ser-2 is subject to Phosphoserine. Thr-16 carries the post-translational modification Phosphothreonine. A Protein kinase domain is found at 24–308; the sequence is YQNLSPVGSG…AAQALAHAYF (285 aa). Residues 30–38 and Lys-53 contribute to the ATP site; that span reads VGSGAYGSV. Lys-53 and Lys-152 each carry N6-acetyllysine. Asp-168 serves as the catalytic Proton acceptor. Thr-180 carries the post-translational modification Phosphothreonine; by MAP2K3, MAP2K4, MAP2K6 and autocatalysis. The short motif at 180–182 is the TXY element; the sequence is TGY. Tyr-182 carries the phosphotyrosine; by MAP2K3, MAP2K4, MAP2K6 and autocatalysis modification. The residue at position 263 (Thr-263) is a Phosphothreonine. Tyr-323 carries the phosphotyrosine; by ZAP70 modification.

This sequence belongs to the protein kinase superfamily. CMGC Ser/Thr protein kinase family. MAP kinase subfamily. Component of a signaling complex containing at least AKAP13, PKN1, MAPK14, ZAK and MAP2K3. Within this complex, AKAP13 interacts directly with PKN1, which in turn recruits MAPK14, MAP2K3 and ZAK. Binds to a kinase interaction motif within the protein tyrosine phosphatase, PTPRR. This interaction retains MAPK14 in the cytoplasm and prevents nuclear accumulation. Interacts with SPAG9 and GADD45A. Interacts with CDC25B, CDC25C, DUSP1, DUSP10, DUSP16, NP60, SUPT20H and TAB1. Interacts with casein kinase II subunits CSNK2A1 and CSNK2B. Interacts with PPM1D. Interacts with CDK5RAP3; recruits PPM1D to MAPK14 and may regulate its dephosphorylation. Interacts with DUSP2; this interaction does not lead to catalytic activation of DUSP2 and dephosphrylation of MAPK14. The cofactor is Mg(2+). In terms of processing, dually phosphorylated on Thr-180 and Tyr-182 by the MAP2Ks MAP2K3/MKK3, MAP2K4/MKK4 and MAP2K6/MKK6 in response to inflammatory citokines, environmental stress or growth factors, which activates the enzyme. Dual phosphorylation can also be mediated by TAB1-mediated autophosphorylation. TCR engagement in T-cells also leads to Tyr-323 phosphorylation by ZAP70. Dephosphorylated and inactivated by DUPS1, DUSP10 and DUSP16. PPM1D also mediates dephosphorylation and inactivation of MAPK14. Acetylated at Lys-53 and Lys-152 by KAT2B and EP300. Acetylation at Lys-53 increases the affinity for ATP and enhances kinase activity. Lys-53 and Lys-152 are deacetylated by HDAC3. Post-translationally, ubiquitinated. Ubiquitination leads to degradation by the proteasome pathway. Brain, heart, placenta, pancreas and skeletal muscle. Expressed to a lesser extent in lung, liver and kidney.

The protein resides in the cytoplasm. It localises to the nucleus. The catalysed reaction is L-seryl-[protein] + ATP = O-phospho-L-seryl-[protein] + ADP + H(+). The enzyme catalyses L-threonyl-[protein] + ATP = O-phospho-L-threonyl-[protein] + ADP + H(+). With respect to regulation, activated by cell stresses such as DNA damage, heat shock, osmotic shock, anisomycin and sodium arsenite, as well as pro-inflammatory stimuli such as bacterial lipopolysaccharide (LPS) and interleukin-1. Activation occurs through dual phosphorylation of Thr-180 and Tyr-182 by either of two dual specificity kinases, MAP2K3/MKK3 or MAP2K6/MKK6, and potentially also MAP2K4/MKK4, as well as by TAB1-mediated autophosphorylation. MAPK14 phosphorylated on both Thr-180 and Tyr-182 is 10-20-fold more active than MAPK14 phosphorylated only on Thr-180, whereas MAPK14 phosphorylated on Tyr-182 alone is inactive. whereas Thr-180 is necessary for catalysis, Tyr-182 may be required for auto-activation and substrate recognition. Phosphorylated at Tyr-323 by ZAP70 in an alternative activation pathway in response to TCR signaling in T-cells. This alternative pathway is inhibited by GADD45A. Inhibited by dual specificity phosphatases, such as DUSP1, DUSP10, and DUSP16. Specifically inhibited by the binding of pyridinyl-imidazole compounds, which are cytokine-suppressive anti-inflammatory drugs (CSAID). Isoform Mxi2 is 100-fold less sensitive to these agents than the other isoforms and is not inhibited by DUSP1. Isoform Exip is not activated by MAP2K6. SB203580 is an inhibitor of MAPK14. Serine/threonine kinase which acts as an essential component of the MAP kinase signal transduction pathway. MAPK14 is one of the four p38 MAPKs which play an important role in the cascades of cellular responses evoked by extracellular stimuli such as pro-inflammatory cytokines or physical stress leading to direct activation of transcription factors. Accordingly, p38 MAPKs phosphorylate a broad range of proteins and it has been estimated that they may have approximately 200 to 300 substrates each. Some of the targets are downstream kinases which are activated through phosphorylation and further phosphorylate additional targets. RPS6KA5/MSK1 and RPS6KA4/MSK2 can directly phosphorylate and activate transcription factors such as CREB1, ATF1, the NF-kappa-B isoform RELA/NFKB3, STAT1 and STAT3, but can also phosphorylate histone H3 and the nucleosomal protein HMGN1. RPS6KA5/MSK1 and RPS6KA4/MSK2 play important roles in the rapid induction of immediate-early genes in response to stress or mitogenic stimuli, either by inducing chromatin remodeling or by recruiting the transcription machinery. On the other hand, two other kinase targets, MAPKAPK2/MK2 and MAPKAPK3/MK3, participate in the control of gene expression mostly at the post-transcriptional level, by phosphorylating ZFP36 (tristetraprolin) and ELAVL1, and by regulating EEF2K, which is important for the elongation of mRNA during translation. MKNK1/MNK1 and MKNK2/MNK2, two other kinases activated by p38 MAPKs, regulate protein synthesis by phosphorylating the initiation factor EIF4E2. MAPK14 also interacts with casein kinase II, leading to its activation through autophosphorylation and further phosphorylation of TP53/p53. In the cytoplasm, the p38 MAPK pathway is an important regulator of protein turnover. For example, CFLAR is an inhibitor of TNF-induced apoptosis whose proteasome-mediated degradation is regulated by p38 MAPK phosphorylation. In a similar way, MAPK14 phosphorylates the ubiquitin ligase SIAH2, regulating its activity towards EGLN3. MAPK14 may also inhibit the lysosomal degradation pathway of autophagy by interfering with the intracellular trafficking of the transmembrane protein ATG9. Another function of MAPK14 is to regulate the endocytosis of membrane receptors by different mechanisms that impinge on the small GTPase RAB5A. In addition, clathrin-mediated EGFR internalization induced by inflammatory cytokines and UV irradiation depends on MAPK14-mediated phosphorylation of EGFR itself as well as of RAB5A effectors. Ectodomain shedding of transmembrane proteins is regulated by p38 MAPKs as well. In response to inflammatory stimuli, p38 MAPKs phosphorylate the membrane-associated metalloprotease ADAM17. Such phosphorylation is required for ADAM17-mediated ectodomain shedding of TGF-alpha family ligands, which results in the activation of EGFR signaling and cell proliferation. Another p38 MAPK substrate is FGFR1. FGFR1 can be translocated from the extracellular space into the cytosol and nucleus of target cells, and regulates processes such as rRNA synthesis and cell growth. FGFR1 translocation requires p38 MAPK activation. In the nucleus, many transcription factors are phosphorylated and activated by p38 MAPKs in response to different stimuli. Classical examples include ATF1, ATF2, ATF6, ELK1, PTPRH, DDIT3, TP53/p53 and MEF2C and MEF2A. The p38 MAPKs are emerging as important modulators of gene expression by regulating chromatin modifiers and remodelers. The promoters of several genes involved in the inflammatory response, such as IL6, IL8 and IL12B, display a p38 MAPK-dependent enrichment of histone H3 phosphorylation on 'Ser-10' (H3S10ph) in LPS-stimulated myeloid cells. This phosphorylation enhances the accessibility of the cryptic NF-kappa-B-binding sites marking promoters for increased NF-kappa-B recruitment. Phosphorylates CDC25B and CDC25C which is required for binding to 14-3-3 proteins and leads to initiation of a G2 delay after ultraviolet radiation. Phosphorylates TIAR following DNA damage, releasing TIAR from GADD45A mRNA and preventing mRNA degradation. The p38 MAPKs may also have kinase-independent roles, which are thought to be due to the binding to targets in the absence of phosphorylation. Protein O-Glc-N-acylation catalyzed by the OGT is regulated by MAPK14, and, although OGT does not seem to be phosphorylated by MAPK14, their interaction increases upon MAPK14 activation induced by glucose deprivation. This interaction may regulate OGT activity by recruiting it to specific targets such as neurofilament H, stimulating its O-Glc-N-acylation. Required in mid-fetal development for the growth of embryo-derived blood vessels in the labyrinth layer of the placenta. Also plays an essential role in developmental and stress-induced erythropoiesis, through regulation of EPO gene expression. Isoform MXI2 activation is stimulated by mitogens and oxidative stress and only poorly phosphorylates ELK1 and ATF2. Isoform EXIP may play a role in the early onset of apoptosis. Phosphorylates S100A9 at 'Thr-113'. Phosphorylates NLRP1 downstream of MAP3K20/ZAK in response to UV-B irradiation and ribosome collisions, promoting activation of the NLRP1 inflammasome and pyroptosis. In terms of biological role, (Microbial infection) Activated by phosphorylation by M.tuberculosis EsxA in T-cells leading to inhibition of IFN-gamma production; phosphorylation is apparent within 15 minutes and is inhibited by kinase-specific inhibitors SB203580 and siRNA. The sequence is that of Mitogen-activated protein kinase 14 from Homo sapiens (Human).